The chain runs to 337 residues: Ketol-acid reductoisomerase (NADP(+)) (337 aa).

The KARI N-terminal Rossmann domain occupies 3–183 (VEMFYDDDAD…GGARAGVIKT (181 aa)). NADP(+)-binding positions include 26–29 (YGSQ), K49, S52, S54, and 84–87 (DTAQ). Residue H109 is part of the active site. G135 contacts NADP(+). Residues 184–329 (TFKEETETDL…KKLRDLMSWV (146 aa)) enclose the KARI C-terminal knotted domain. Positions 192, 196, 228, and 232 each coordinate Mg(2+). Residue S253 participates in substrate binding.

This sequence belongs to the ketol-acid reductoisomerase family. Mg(2+) is required as a cofactor.

It carries out the reaction (2R)-2,3-dihydroxy-3-methylbutanoate + NADP(+) = (2S)-2-acetolactate + NADPH + H(+). The catalysed reaction is (2R,3R)-2,3-dihydroxy-3-methylpentanoate + NADP(+) = (S)-2-ethyl-2-hydroxy-3-oxobutanoate + NADPH + H(+). It functions in the pathway amino-acid biosynthesis; L-isoleucine biosynthesis; L-isoleucine from 2-oxobutanoate: step 2/4. The protein operates within amino-acid biosynthesis; L-valine biosynthesis; L-valine from pyruvate: step 2/4. Its function is as follows. Involved in the biosynthesis of branched-chain amino acids (BCAA). Catalyzes an alkyl-migration followed by a ketol-acid reduction of (S)-2-acetolactate (S2AL) to yield (R)-2,3-dihydroxy-isovalerate. In the isomerase reaction, S2AL is rearranged via a Mg-dependent methyl migration to produce 3-hydroxy-3-methyl-2-ketobutyrate (HMKB). In the reductase reaction, this 2-ketoacid undergoes a metal-dependent reduction by NADPH to yield (R)-2,3-dihydroxy-isovalerate. The chain is Ketol-acid reductoisomerase (NADP(+)) from Mycolicibacterium smegmatis (strain ATCC 700084 / mc(2)155) (Mycobacterium smegmatis).